Here is a 125-residue protein sequence, read N- to C-terminus: Evasin P672 (125 aa).

The first 21 residues, M1–A21, serve as a signal peptide directing secretion. N-linked (GlcNAc...) asparagine glycans are attached at residues N35, N55, N65, N72, N78, N104, N112, and N118. Intrachain disulfides connect C70–C110, C87–C115, and C105–C124.

It is found in the secreted. Its function is as follows. Salivary chemokine-binding protein which has chemokine-neutralizing activity and binds to host chemokines CCL1, CCL2, CCL3, CCL3L1, CCL7, CCL8, CCL11, CCL12, CCL13, CCL14, CCL15, CCL16, CCL18 and CCL23. Binds to CCL8 with 1:1 stoichiometry and disrupts CCL8 homodimer formation. The protein is Evasin P672 of Rhipicephalus pulchellus (Yellow backed tick).